Reading from the N-terminus, the 400-residue chain is Delta(12) fatty acid desaturase (400 aa).

The chain crosses the membrane as a helical span at residues 91–111 (LAWPAYWIMQGIVCTGIWVLA). A Histidine box-1 motif is present at residues 112–116 (HECGH). Residues 148–152 (HSKHH) carry the Histidine box-2 motif. 3 consecutive transmembrane segments (helical) span residues 199 to 219 (IVTLFWMVIQFLFGWPAYLIM), 245 to 265 (FFDIIISDLGVLAALGALIYA), and 277 to 297 (YYIVPYLFVNFWLVLITFLQH). The short motif at 339 to 343 (HVAHH) is the Histidine box-3 element.

This sequence belongs to the fatty acid desaturase type 1 family.

The protein localises to the membrane. The enzyme catalyses (9Z)-octadecenoyl-CoA + 2 Fe(II)-[cytochrome b5] + O2 + 2 H(+) = (9Z,12Z)-octadecadienoyl-CoA + 2 Fe(III)-[cytochrome b5] + 2 H2O. It catalyses the reaction (9Z)-hexadecenoyl-CoA + 2 Fe(II)-[cytochrome b5] + O2 + 2 H(+) = (9Z,12Z)-hexadecadienoyl-CoA + 2 Fe(III)-[cytochrome b5] + 2 H2O. It functions in the pathway lipid metabolism; polyunsaturated fatty acid biosynthesis. Functionally, catalyzes the desaturation of oleic acid (Delta(9)-18:1) to linoleic acid (Delta(9), Delta(12)-18:2). The polypeptide is Delta(12) fatty acid desaturase (Mortierella alpina (Oleaginous fungus)).